The following is a 134-amino-acid chain: ATP synthase epsilon chain (134 aa).

The protein belongs to the ATPase epsilon chain family. In terms of assembly, F-type ATPases have 2 components, CF(1) - the catalytic core - and CF(0) - the membrane proton channel. CF(1) has five subunits: alpha(3), beta(3), gamma(1), delta(1), epsilon(1). CF(0) has three main subunits: a, b and c.

Its subcellular location is the cellular thylakoid membrane. Functionally, produces ATP from ADP in the presence of a proton gradient across the membrane. The polypeptide is ATP synthase epsilon chain (Prochlorococcus marinus (strain MIT 9215)).